We begin with the raw amino-acid sequence, 371 residues long: DNA primase large subunit PriL (371 aa).

[4Fe-4S] cluster is bound by residues Cys-230, Cys-301, Cys-310, and Cys-317. Positions 337–371 (EREKEEGKEKGNEEKKEKREEHEKKNEKGNEIKEK) are disordered.

It belongs to the eukaryotic-type primase large subunit family. Heterodimer of a small subunit (PriS) and a large subunit (PriL). [4Fe-4S] cluster is required as a cofactor.

Functionally, regulatory subunit of DNA primase, an RNA polymerase that catalyzes the synthesis of short RNA molecules used as primers for DNA polymerase during DNA replication. Stabilizes and modulates the activity of the small subunit, increasing the rate of DNA synthesis, and conferring RNA synthesis capability. The DNA polymerase activity may enable DNA primase to also catalyze primer extension after primer synthesis. May also play a role in DNA repair. This chain is DNA primase large subunit PriL, found in Methanosarcina acetivorans (strain ATCC 35395 / DSM 2834 / JCM 12185 / C2A).